A 212-amino-acid polypeptide reads, in one-letter code: Methylthioribulose-1-phosphate dehydratase (212 aa).

His97 and His99 together coordinate Zn(2+).

Belongs to the aldolase class II family. MtnB subfamily. As to quaternary structure, homotetramer. The cofactor is Zn(2+).

It catalyses the reaction 5-(methylsulfanyl)-D-ribulose 1-phosphate = 5-methylsulfanyl-2,3-dioxopentyl phosphate + H2O. It participates in amino-acid biosynthesis; L-methionine biosynthesis via salvage pathway; L-methionine from S-methyl-5-thio-alpha-D-ribose 1-phosphate: step 2/6. In terms of biological role, catalyzes the dehydration of methylthioribulose-1-phosphate (MTRu-1-P) into 2,3-diketo-5-methylthiopentyl-1-phosphate (DK-MTP-1-P). This Bacillus cereus (strain B4264) protein is Methylthioribulose-1-phosphate dehydratase.